A 1155-amino-acid chain; its full sequence is Alpha,alpha-trehalose-phosphate synthase [UDP-forming] 1 (1155 aa).

The interval 56-94 (LQRRRSVSSRGGSLRGSMDSLNDSGQNGAEDVIGVEDEE) is disordered. Over residues 63-72 (SSRGGSLRGS) the composition is skewed to low complexity.

In the N-terminal section; belongs to the glycosyltransferase 20 family. It in the C-terminal section; belongs to the gob-1 trehalose phosphatase family.

It carries out the reaction D-glucose 6-phosphate + UDP-alpha-D-glucose = alpha,alpha-trehalose 6-phosphate + UDP + H(+). Its function is as follows. Catalyzes the production of trehalose from glucose-6-phosphate and UDP-alpha-D-glucose in a 2 step process. The sequence is that of Alpha,alpha-trehalose-phosphate synthase [UDP-forming] 1 (tps-1) from Aphelenchoides avenae (Mycophagous nematode worm).